The chain runs to 1457 residues: Bridge-like lipid transfer protein family member 3B (1457 aa).

The region spanning 3 to 94 is the Chorein N-terminal domain; it reads GIIKKQILKH…DKVIMEMSTC (92 aa). Disordered stretches follow at residues 267–295 and 409–449; these read STEQ…KTPQ and DRNL…PQPS. Over residues 278 to 295 the composition is skewed to polar residues; it reads PTQSSTVTSSAQHVKTPQ. Phosphoserine is present on residues serine 414, serine 418, serine 774, and serine 934. Disordered stretches follow at residues 975 to 1038, 1056 to 1099, and 1145 to 1183; these read SEDE…TGKG, ASLS…LSVS, and SNTS…TQEN. The span at 980–995 shows a compositional bias: polar residues; sequence SGLSHKSGSGEMTSEG. A Phosphoserine modification is found at serine 1008. Polar residues predominate over residues 1145–1180; the sequence is SNTSCQSPAESVNTSANTQTCGEASPEAVSTNSEGT. Residues 1410–1455 adopt a coiled-coil conformation; the sequence is ANFLDITREQLMEENECLRQRLAQAKMELAEAHSARDELLHQMKRM.

As to quaternary structure, homodimer (via N-terminus). Associates with the Golgi-associated retrograde protein (GARP) complex. Interacts with GARP complex component VPS52. Interacts (via C-terminal coiled-coil domain) with STX6.

It is found in the cytoplasm. The protein resides in the cytosol. It localises to the early endosome. In terms of biological role, tube-forming lipid transport protein which mediates the transfer of lipids between membranes at organelle contact sites. Required for retrograde traffic of vesicle clusters in the early endocytic pathway to the Golgi complex. The protein is Bridge-like lipid transfer protein family member 3B (Bltp3b) of Mus musculus (Mouse).